The chain runs to 700 residues: Phosphoribosylformylglycinamidine synthase subunit PurL (700 aa).

The active site involves histidine 34. Tyrosine 37 contributes to the ATP binding site. Glutamate 79 provides a ligand contact to Mg(2+). Residues 80–83 (SHNH) and arginine 102 contribute to the substrate site. The active-site Proton acceptor is the histidine 81. Aspartate 103 is a Mg(2+) binding site. Glutamine 227 contacts substrate. Aspartate 255 provides a ligand contact to Mg(2+). 299-301 (ESQ) lines the substrate pocket. ATP-binding residues include aspartate 476 and glycine 513. Asparagine 514 contacts Mg(2+). Serine 516 contributes to the substrate binding site.

This sequence belongs to the FGAMS family. As to quaternary structure, monomer. Part of the FGAM synthase complex composed of 1 PurL, 1 PurQ and 2 PurS subunits.

The protein localises to the cytoplasm. It carries out the reaction N(2)-formyl-N(1)-(5-phospho-beta-D-ribosyl)glycinamide + L-glutamine + ATP + H2O = 2-formamido-N(1)-(5-O-phospho-beta-D-ribosyl)acetamidine + L-glutamate + ADP + phosphate + H(+). The protein operates within purine metabolism; IMP biosynthesis via de novo pathway; 5-amino-1-(5-phospho-D-ribosyl)imidazole from N(2)-formyl-N(1)-(5-phospho-D-ribosyl)glycinamide: step 1/2. Functionally, part of the phosphoribosylformylglycinamidine synthase complex involved in the purines biosynthetic pathway. Catalyzes the ATP-dependent conversion of formylglycinamide ribonucleotide (FGAR) and glutamine to yield formylglycinamidine ribonucleotide (FGAM) and glutamate. The FGAM synthase complex is composed of three subunits. PurQ produces an ammonia molecule by converting glutamine to glutamate. PurL transfers the ammonia molecule to FGAR to form FGAM in an ATP-dependent manner. PurS interacts with PurQ and PurL and is thought to assist in the transfer of the ammonia molecule from PurQ to PurL. The polypeptide is Phosphoribosylformylglycinamidine synthase subunit PurL (Halobacterium salinarum (strain ATCC 29341 / DSM 671 / R1)).